The following is a 256-amino-acid chain: uncharacterized protein (256 aa).

The 68-residue stretch at Val-16–Lys-83 folds into the S4 RNA-binding domain. Asp-121 functions as the Nucleophile in the catalytic mechanism.

It belongs to the pseudouridine synthase RsuA family.

The catalysed reaction is a uridine in RNA = a pseudouridine in RNA. This is an uncharacterized protein from Mycobacterium leprae (strain TN).